Here is a 536-residue protein sequence, read N- to C-terminus: Phosphoenolpyruvate carboxykinase (ATP) (536 aa).

Substrate contacts are provided by Arg-61, Tyr-195, and Lys-201. ATP-binding positions include Lys-201, His-220, and 236-244 (GLSGTGKTT). Positions 201 and 220 each coordinate Mn(2+). Asp-257 is a Mn(2+) binding site. ATP-binding residues include Glu-285, Arg-322, and Thr-447. Residue Arg-322 participates in substrate binding.

This sequence belongs to the phosphoenolpyruvate carboxykinase (ATP) family. It depends on Mn(2+) as a cofactor.

It localises to the cytoplasm. The catalysed reaction is oxaloacetate + ATP = phosphoenolpyruvate + ADP + CO2. It participates in carbohydrate biosynthesis; gluconeogenesis. Its function is as follows. Involved in the gluconeogenesis. Catalyzes the conversion of oxaloacetate (OAA) to phosphoenolpyruvate (PEP) through direct phosphoryl transfer between the nucleoside triphosphate and OAA. The sequence is that of Phosphoenolpyruvate carboxykinase (ATP) from Rhizobium etli (strain CIAT 652).